Here is a 512-residue protein sequence, read N- to C-terminus: HMG box-containing protein 1 (512 aa).

Residues 151-180 form a disordered region; sequence RPPPVASSKGEPAFPHHWKEQTPVRHERAN. The segment covering 167–180 has biased composition (basic and acidic residues); it reads HWKEQTPVRHERAN. Residues 201–343 form the AXH domain; sequence WCNSWPSTAW…PPGHPDAINF (143 aa). The segment at residues 432–500 is a DNA-binding region (HMG box); that stretch reads CKRPMNAFML…EQKRLNPDCW (69 aa).

As to quaternary structure, binds TCF4. Binds RB1. Binds the second PAH repeat of SIN3A. Post-translationally, ubiquitinated by the CTLH E3 ubiquitin-protein ligase complex, leading to subsequent proteasomal degradation.

The protein localises to the nucleus. In terms of biological role, transcriptional repressor that binds to the promoter region of target genes. Plays a role in the regulation of the cell cycle and of the Wnt pathway. Binds preferentially to the sequence 5'-TTCATTCATTCA-3'. Binding to the histone H1.0 promoter is enhanced by interaction with RB1. Disrupts the interaction between DNA and TCF4. The protein is HMG box-containing protein 1 (HBP1) of Bos taurus (Bovine).